A 164-amino-acid chain; its full sequence is V-type proton ATPase subunit c3 (164 aa).

The Lumenal segment spans residues 1–11 (MSTFSGDETAP). The chain crosses the membrane as a helical span at residues 12–32 (FFGFLGAAAALVFSCMGAAYG). Topologically, residues 33-54 (TAKSGVGVASMGVMRPELVMKS) are cytoplasmic. A helical transmembrane segment spans residues 55 to 75 (IVPVVMAGVLGIYGLIIAVII). The Lumenal portion of the chain corresponds to 76 to 94 (STGINPKAKSYYLFDGYAH). Residues 95–116 (LSSGLACGLAGLSAGMAIGIVG) traverse the membrane as a helical segment. The Cytoplasmic segment spans residues 117 to 128 (DAGVRANAQQPK). A helical transmembrane segment spans residues 129 to 154 (LFVGMILILIFAEALALYGLIVGIIL). Residues 155–164 (SSRAGQSRAE) lie on the Lumenal side of the membrane.

Belongs to the V-ATPase proteolipid subunit family. In terms of assembly, V-ATPase is a heteromultimeric enzyme composed of a peripheral catalytic V1 complex (components A to H) attached to an integral membrane V0 proton pore complex (components: a, c, c'', d and e). The proteolipid components c and c'' are present as a hexameric ring that forms the proton-conducting pore. In terms of tissue distribution, expressed in leaf, root, flower and silique.

It localises to the vacuole membrane. Proton-conducting pore forming subunit of the membrane integral V0 complex of vacuolar ATPase. V-ATPase is responsible for acidifying a variety of intracellular compartments in eukaryotic cells. In Arabidopsis thaliana (Mouse-ear cress), this protein is V-type proton ATPase subunit c3 (VHA-c3).